Here is a 307-residue protein sequence, read N- to C-terminus: Elongation factor Ts (307 aa).

The involved in Mg(2+) ion dislocation from EF-Tu stretch occupies residues 80 to 83; sequence TDFV.

It belongs to the EF-Ts family.

It is found in the cytoplasm. Associates with the EF-Tu.GDP complex and induces the exchange of GDP to GTP. It remains bound to the aminoacyl-tRNA.EF-Tu.GTP complex up to the GTP hydrolysis stage on the ribosome. This is Elongation factor Ts from Methylobacterium nodulans (strain LMG 21967 / CNCM I-2342 / ORS 2060).